Consider the following 584-residue polypeptide: 2-isopropylmalate synthase (584 aa).

The region spanning 40-314 (PRWCAVDLRD…DPQIDFSDIE (275 aa)) is the Pyruvate carboxyltransferase domain. 4 residues coordinate Mg(2+): D49, H253, H255, and N289. Residues 456–584 (SRDGSGSTWG…VRDAQEAAQD (129 aa)) are regulatory domain.

It belongs to the alpha-IPM synthase/homocitrate synthase family. LeuA type 2 subfamily. In terms of assembly, homodimer. It depends on Mg(2+) as a cofactor.

The protein localises to the cytoplasm. It carries out the reaction 3-methyl-2-oxobutanoate + acetyl-CoA + H2O = (2S)-2-isopropylmalate + CoA + H(+). It participates in amino-acid biosynthesis; L-leucine biosynthesis; L-leucine from 3-methyl-2-oxobutanoate: step 1/4. Its function is as follows. Catalyzes the condensation of the acetyl group of acetyl-CoA with 3-methyl-2-oxobutanoate (2-ketoisovalerate) to form 3-carboxy-3-hydroxy-4-methylpentanoate (2-isopropylmalate). This chain is 2-isopropylmalate synthase, found in Kocuria rhizophila (strain ATCC 9341 / DSM 348 / NBRC 103217 / DC2201).